Consider the following 122-residue polypeptide: Large ribosomal subunit protein bL17 (122 aa).

This sequence belongs to the bacterial ribosomal protein bL17 family. Part of the 50S ribosomal subunit. Contacts protein L32.

The protein is Large ribosomal subunit protein bL17 of Staphylococcus carnosus (strain TM300).